We begin with the raw amino-acid sequence, 456 residues long: Bifunctional protein GlmU (456 aa).

The tract at residues 1 to 229 (MYNCAIILAA…FEETMGVNSR (229 aa)) is pyrophosphorylase. UDP-N-acetyl-alpha-D-glucosamine is bound by residues 8-11 (LAAG), Lys22, Gln73, and 78-79 (GT). Residue Asp103 coordinates Mg(2+). UDP-N-acetyl-alpha-D-glucosamine-binding residues include Gly140, Glu155, Asn170, and Asn227. Residue Asn227 coordinates Mg(2+). Positions 230-250 (VQLAEAEKIMRNRINKIHMEN) are linker. Residues 251 to 456 (GVTLIDHNNT…SWVYKKGLKK (206 aa)) form an N-acetyltransferase region. UDP-N-acetyl-alpha-D-glucosamine is bound by residues Arg332 and Lys350. The active-site Proton acceptor is the His362. UDP-N-acetyl-alpha-D-glucosamine-binding residues include Tyr365 and Asn376. Residues 385–386 (NY), Ala422, and Arg439 each bind acetyl-CoA.

This sequence in the N-terminal section; belongs to the N-acetylglucosamine-1-phosphate uridyltransferase family. In the C-terminal section; belongs to the transferase hexapeptide repeat family. As to quaternary structure, homotrimer. Mg(2+) is required as a cofactor.

The protein localises to the cytoplasm. It carries out the reaction alpha-D-glucosamine 1-phosphate + acetyl-CoA = N-acetyl-alpha-D-glucosamine 1-phosphate + CoA + H(+). The enzyme catalyses N-acetyl-alpha-D-glucosamine 1-phosphate + UTP + H(+) = UDP-N-acetyl-alpha-D-glucosamine + diphosphate. It functions in the pathway nucleotide-sugar biosynthesis; UDP-N-acetyl-alpha-D-glucosamine biosynthesis; N-acetyl-alpha-D-glucosamine 1-phosphate from alpha-D-glucosamine 6-phosphate (route II): step 2/2. It participates in nucleotide-sugar biosynthesis; UDP-N-acetyl-alpha-D-glucosamine biosynthesis; UDP-N-acetyl-alpha-D-glucosamine from N-acetyl-alpha-D-glucosamine 1-phosphate: step 1/1. The protein operates within bacterial outer membrane biogenesis; LPS lipid A biosynthesis. Its function is as follows. Catalyzes the last two sequential reactions in the de novo biosynthetic pathway for UDP-N-acetylglucosamine (UDP-GlcNAc). The C-terminal domain catalyzes the transfer of acetyl group from acetyl coenzyme A to glucosamine-1-phosphate (GlcN-1-P) to produce N-acetylglucosamine-1-phosphate (GlcNAc-1-P), which is converted into UDP-GlcNAc by the transfer of uridine 5-monophosphate (from uridine 5-triphosphate), a reaction catalyzed by the N-terminal domain. The sequence is that of Bifunctional protein GlmU from Clostridium kluyveri (strain NBRC 12016).